We begin with the raw amino-acid sequence, 354 residues long: Uroporphyrinogen decarboxylase (354 aa).

Substrate-binding positions include 27–31, Asp-77, Tyr-154, Ser-209, and His-327; that span reads RQAGR.

It belongs to the uroporphyrinogen decarboxylase family. Homodimer.

The protein resides in the cytoplasm. It catalyses the reaction uroporphyrinogen III + 4 H(+) = coproporphyrinogen III + 4 CO2. Its pathway is porphyrin-containing compound metabolism; protoporphyrin-IX biosynthesis; coproporphyrinogen-III from 5-aminolevulinate: step 4/4. In terms of biological role, catalyzes the decarboxylation of four acetate groups of uroporphyrinogen-III to yield coproporphyrinogen-III. The protein is Uroporphyrinogen decarboxylase of Shewanella halifaxensis (strain HAW-EB4).